Consider the following 137-residue polypeptide: uncharacterized protein (137 aa).

This sequence belongs to the DCC thiol-disulfide oxidoreductase family.

This is an uncharacterized protein from Bacillus subtilis (strain 168).